We begin with the raw amino-acid sequence, 228 residues long: PKHD-type hydroxylase Reut_A2877 (228 aa).

One can recognise a Fe2OG dioxygenase domain in the interval 80 to 180 (IVYPPMFNRY…RVASFFWIQS (101 aa)). Fe cation is bound by residues H98, D100, and H161. Residue R171 participates in 2-oxoglutarate binding.

Fe(2+) serves as cofactor. The cofactor is L-ascorbate.

This chain is PKHD-type hydroxylase Reut_A2877, found in Cupriavidus pinatubonensis (strain JMP 134 / LMG 1197) (Cupriavidus necator (strain JMP 134)).